The primary structure comprises 377 residues: Chaperone protein DnaJ (377 aa).

The J domain maps to 4–69; sequence DYYEALGVTR…QKRAAYDRFG (66 aa). The segment at 135 to 213 adopts a CR-type zinc-finger fold; that stretch reads GKTAQIRVPT…CHGQGRVTQE (79 aa). 8 residues coordinate Zn(2+): Cys148, Cys151, Cys165, Cys168, Cys187, Cys190, Cys201, and Cys204. CXXCXGXG motif repeat units follow at residues 148-155, 165-172, 187-194, and 201-208; these read CDECSGSG, CTMCSGSG, CPGCNGRG, and CEKCHGQG.

The protein belongs to the DnaJ family. In terms of assembly, homodimer. Zn(2+) serves as cofactor.

It localises to the cytoplasm. In terms of biological role, participates actively in the response to hyperosmotic and heat shock by preventing the aggregation of stress-denatured proteins and by disaggregating proteins, also in an autonomous, DnaK-independent fashion. Unfolded proteins bind initially to DnaJ; upon interaction with the DnaJ-bound protein, DnaK hydrolyzes its bound ATP, resulting in the formation of a stable complex. GrpE releases ADP from DnaK; ATP binding to DnaK triggers the release of the substrate protein, thus completing the reaction cycle. Several rounds of ATP-dependent interactions between DnaJ, DnaK and GrpE are required for fully efficient folding. Also involved, together with DnaK and GrpE, in the DNA replication of plasmids through activation of initiation proteins. The protein is Chaperone protein DnaJ of Brucella canis (strain ATCC 23365 / NCTC 10854 / RM-666).